Reading from the N-terminus, the 627-residue chain is Chaperone protein HtpG (627 aa).

The interval 1-339 is a; substrate-binding; that stretch reads MKGQETRGFQ…SNDLPLNVSR (339 aa). Positions 340–555 are b; it reads EILQDSRVTQ…ADEMSTQMAK (216 aa). Positions 556-627 are c; the sequence is LFAAAGQQAP…IRRMNQLLSA (72 aa).

This sequence belongs to the heat shock protein 90 family. As to quaternary structure, homodimer.

It is found in the cytoplasm. Functionally, molecular chaperone. Has ATPase activity. The polypeptide is Chaperone protein HtpG (Pectobacterium atrosepticum (strain SCRI 1043 / ATCC BAA-672) (Erwinia carotovora subsp. atroseptica)).